The sequence spans 278 residues: Dermonecrotic toxin LspiSicTox-betaIE2ii (278 aa).

Histidine 5 is a catalytic residue. The Mg(2+) site is built by glutamate 25 and aspartate 27. The active-site Nucleophile is histidine 41. Disulfide bonds link cysteine 45–cysteine 51 and cysteine 47–cysteine 190. Aspartate 85 contacts Mg(2+).

It belongs to the arthropod phospholipase D family. Class II subfamily. Mg(2+) is required as a cofactor. Expressed by the venom gland.

It localises to the secreted. It catalyses the reaction an N-(acyl)-sphingosylphosphocholine = an N-(acyl)-sphingosyl-1,3-cyclic phosphate + choline. It carries out the reaction an N-(acyl)-sphingosylphosphoethanolamine = an N-(acyl)-sphingosyl-1,3-cyclic phosphate + ethanolamine. The catalysed reaction is a 1-acyl-sn-glycero-3-phosphocholine = a 1-acyl-sn-glycero-2,3-cyclic phosphate + choline. The enzyme catalyses a 1-acyl-sn-glycero-3-phosphoethanolamine = a 1-acyl-sn-glycero-2,3-cyclic phosphate + ethanolamine. In terms of biological role, dermonecrotic toxins cleave the phosphodiester linkage between the phosphate and headgroup of certain phospholipids (sphingolipid and lysolipid substrates), forming an alcohol (often choline) and a cyclic phosphate. This toxin acts on sphingomyelin (SM). It may also act on ceramide phosphoethanolamine (CPE), lysophosphatidylcholine (LPC) and lysophosphatidylethanolamine (LPE), but not on lysophosphatidylserine (LPS), and lysophosphatidylglycerol (LPG). It acts by transphosphatidylation, releasing exclusively cyclic phosphate products as second products. Induces dermonecrosis, hemolysis, increased vascular permeability, edema, inflammatory response, and platelet aggregation. This Loxosceles spinulosa (Recluse spider) protein is Dermonecrotic toxin LspiSicTox-betaIE2ii.